A 212-amino-acid chain; its full sequence is 2-phospho-L-lactate guanylyltransferase (212 aa).

The protein belongs to the CofC family. As to quaternary structure, homodimer.

The catalysed reaction is (2S)-2-phospholactate + GTP + H(+) = (2S)-lactyl-2-diphospho-5'-guanosine + diphosphate. The protein operates within cofactor biosynthesis; coenzyme F420 biosynthesis. Functionally, guanylyltransferase that catalyzes the activation of (2S)-2-phospholactate (2-PL) as (2S)-lactyl-2-diphospho-5'-guanosine, via the condensation of 2-PL with GTP. It is involved in the biosynthesis of coenzyme F420, a hydride carrier cofactor. This is 2-phospho-L-lactate guanylyltransferase from Methanocorpusculum labreanum (strain ATCC 43576 / DSM 4855 / Z).